Reading from the N-terminus, the 414-residue chain is Arrestin domain-containing protein 3 (414 aa).

Short sequence motifs (PPxY motif) lie at residues 346–349 and 391–394; these read PPSY and PPLY. Residues 393–414 are disordered; the sequence is LYSEIDPNPDQSADDRPSCPSR. The span at 405–414 shows a compositional bias: basic and acidic residues; the sequence is ADDRPSCPSR.

Belongs to the arrestin family. Interacts (via PPxY motifs) with NEDD4 (via WW domains). Interacts with ADRB2. Interacts with ADRB3. Interacts with HGS (via PPxY motifs). Does not bind TXN (thioredoxin). Interacts with ITCH. Interacts with WWP1 (via WW domains). As to expression, highly expressed in skeletal muscle, placenta, kidney, lung, liver, blood, adrenal gland, lymph node, mammary gland, thyroid, and trachea. Very low levels in colon, thymus, spleen, small intestine, bladder and bone marrow. Strong expression in differentiated adipocytes compared to preadipocytes. Detected in omental fat and subcutaneous fat tissue.

The protein resides in the cytoplasm. It is found in the cell membrane. Its subcellular location is the lysosome. The protein localises to the endosome. It localises to the early endosome. Functionally, adapter protein that plays a role in regulating cell-surface expression of adrenergic receptors and probably also other G protein-coupled receptors. Plays a role in NEDD4-mediated ubiquitination and endocytosis af activated ADRB2 and subsequent ADRB2 degradation. May recruit NEDD4 to ADRB2. Alternatively, may function as adapter protein that does not play a major role in recruiting NEDD4 to ADRB2, but rather plays a role in a targeting ADRB2 to endosomes. The protein is Arrestin domain-containing protein 3 (ARRDC3) of Homo sapiens (Human).